We begin with the raw amino-acid sequence, 502 residues long: Pyruvate kinase (502 aa).

Arginine 54 is a substrate binding site. The K(+) site is built by asparagine 56, serine 58, aspartate 88, and threonine 89. Asparagine 56–histidine 59 contacts ATP. ATP contacts are provided by arginine 95 and lysine 184. Residue glutamate 252 coordinates Mg(2+). Substrate is bound by residues glycine 275, aspartate 276, and threonine 308. Aspartate 276 provides a ligand contact to Mg(2+).

Belongs to the pyruvate kinase family. As to quaternary structure, homotetramer. Mg(2+) serves as cofactor. Requires K(+) as cofactor.

The catalysed reaction is pyruvate + ATP = phosphoenolpyruvate + ADP + H(+). It functions in the pathway carbohydrate degradation; glycolysis; pyruvate from D-glyceraldehyde 3-phosphate: step 5/5. With respect to regulation, regulated by phosphoenolpyruvate substrate and is allosterically activated by ribose-5-phosphate, AMP and other nucleoside monophosphates but not by fructose-1,6-bisphosphate. The sequence is that of Pyruvate kinase (pyk) from Lactococcus lactis subsp. lactis (strain IL1403) (Streptococcus lactis).